The primary structure comprises 426 residues: Glutamate-1-semialdehyde 2,1-aminomutase (426 aa).

Lysine 265 carries the post-translational modification N6-(pyridoxal phosphate)lysine.

Belongs to the class-III pyridoxal-phosphate-dependent aminotransferase family. HemL subfamily. In terms of assembly, homodimer. Pyridoxal 5'-phosphate is required as a cofactor.

Its subcellular location is the cytoplasm. The catalysed reaction is (S)-4-amino-5-oxopentanoate = 5-aminolevulinate. It functions in the pathway porphyrin-containing compound metabolism; protoporphyrin-IX biosynthesis; 5-aminolevulinate from L-glutamyl-tRNA(Glu): step 2/2. This chain is Glutamate-1-semialdehyde 2,1-aminomutase, found in Aliarcobacter butzleri (strain RM4018) (Arcobacter butzleri).